Consider the following 193-residue polypeptide: dTTP/UTP pyrophosphatase (193 aa).

Asp-77 functions as the Proton acceptor in the catalytic mechanism.

It belongs to the Maf family. YhdE subfamily. It depends on a divalent metal cation as a cofactor.

It is found in the cytoplasm. The catalysed reaction is dTTP + H2O = dTMP + diphosphate + H(+). It carries out the reaction UTP + H2O = UMP + diphosphate + H(+). Its function is as follows. Nucleoside triphosphate pyrophosphatase that hydrolyzes dTTP and UTP. May have a dual role in cell division arrest and in preventing the incorporation of modified nucleotides into cellular nucleic acids. This Bacteroides thetaiotaomicron (strain ATCC 29148 / DSM 2079 / JCM 5827 / CCUG 10774 / NCTC 10582 / VPI-5482 / E50) protein is dTTP/UTP pyrophosphatase.